The following is a 245-amino-acid chain: Outer membrane protein assembly factor BamD (245 aa).

The signal sequence occupies residues 1 to 19 (MTRMKYLVAAATLSLFLAG). Residue C20 is the site of N-palmitoyl cysteine attachment. A lipid anchor (S-diacylglycerol cysteine) is attached at C20.

It belongs to the BamD family. In terms of assembly, part of the Bam complex, which is composed of the outer membrane protein BamA, and four lipoproteins BamB, BamC, BamD and BamE.

The protein localises to the cell outer membrane. In terms of biological role, part of the outer membrane protein assembly complex, which is involved in assembly and insertion of beta-barrel proteins into the outer membrane. Constitutes, with BamA, the core component of the assembly machinery. The protein is Outer membrane protein assembly factor BamD of Escherichia coli O157:H7.